We begin with the raw amino-acid sequence, 426 residues long: Serine--tRNA ligase (426 aa).

The segment covering 41 to 60 (QTRTEQLQAERNARSKSIGQ) has biased composition (polar residues). The disordered stretch occupies residues 41–64 (QTRTEQLQAERNARSKSIGQAKQR). Position 233-235 (233-235 (TAE)) interacts with L-serine. Residue 264–266 (RSE) participates in ATP binding. Glutamate 287 serves as a coordination point for L-serine. 351-354 (EISS) contributes to the ATP binding site. Serine 387 contacts L-serine.

It belongs to the class-II aminoacyl-tRNA synthetase family. Type-1 seryl-tRNA synthetase subfamily. Homodimer. The tRNA molecule binds across the dimer.

Its subcellular location is the cytoplasm. It carries out the reaction tRNA(Ser) + L-serine + ATP = L-seryl-tRNA(Ser) + AMP + diphosphate + H(+). The enzyme catalyses tRNA(Sec) + L-serine + ATP = L-seryl-tRNA(Sec) + AMP + diphosphate + H(+). The protein operates within aminoacyl-tRNA biosynthesis; selenocysteinyl-tRNA(Sec) biosynthesis; L-seryl-tRNA(Sec) from L-serine and tRNA(Sec): step 1/1. Functionally, catalyzes the attachment of serine to tRNA(Ser). Is also able to aminoacylate tRNA(Sec) with serine, to form the misacylated tRNA L-seryl-tRNA(Sec), which will be further converted into selenocysteinyl-tRNA(Sec). The protein is Serine--tRNA ligase of Pseudomonas fluorescens (strain ATCC BAA-477 / NRRL B-23932 / Pf-5).